Reading from the N-terminus, the 394-residue chain is Phosphoglycerate kinase (394 aa).

Substrate-binding positions include 21 to 23, Arg-36, 59 to 62, Arg-118, and Arg-151; these read DFN and HLGR. Ser-183 is modified (phosphoserine). Position 201 (Lys-201) interacts with ATP. Thr-299 carries the post-translational modification Phosphothreonine. ATP is bound by residues Glu-323 and 350 to 353; that span reads GGDS.

Belongs to the phosphoglycerate kinase family. As to quaternary structure, monomer.

The protein resides in the cytoplasm. It catalyses the reaction (2R)-3-phosphoglycerate + ATP = (2R)-3-phospho-glyceroyl phosphate + ADP. Its pathway is carbohydrate degradation; glycolysis; pyruvate from D-glyceraldehyde 3-phosphate: step 2/5. This is Phosphoglycerate kinase from Bacillus pumilus (strain SAFR-032).